The primary structure comprises 434 residues: Progestin and adipoQ receptor-like protein 1 (434 aa).

Residues 1 to 201 (MNPDEVNRAL…KSIWSLHTET (201 aa)) are Cytoplasmic-facing. Disordered stretches follow at residues 74-103 (LPQQEGHRSRATSFAGRIRAGSDDEAMPKH) and 118-137 (EINLQGTPDKRKDDEDELEV). Residues 202 to 222 (GNIWTHLIGCVAFFFLACWFL) form a helical membrane-spanning segment. The Extracellular segment spans residues 223-234 (TRPDNHIQFQEK). A helical transmembrane segment spans residues 235–255 (VVFSFFFAGAVLCLGLSFAFH). The Cytoplasmic segment spans residues 256-273 (TLSCHSVNVVKIFCKLDY). The helical transmembrane segment at 274-294 (MGISLLIIGSFIPWIYYGFYC) threads the bilayer. Over 295–299 (RREPK) the chain is Extracellular. A helical membrane pass occupies residues 300 to 320 (ITYIAMVSVLGIGAIVVSLWD). The Cytoplasmic portion of the chain corresponds to 321–331 (KFSESRFRPIR). The helical transmembrane segment at 332 to 352 (AAVFVGMGCSGVIPTIHYIIT) threads the bilayer. Topologically, residues 353 to 362 (DGVHSLFADN) are extracellular. The chain crosses the membrane as a helical span at residues 363–383 (SFHWLLLMAFLYLLGAGLYAT). Topologically, residues 384 to 403 (RTPERFFPGKCDIWFQSHQL) are cytoplasmic. The chain crosses the membrane as a helical span at residues 404–424 (FHTCVVIAAFVHYYGISEMAF). Residues 425–434 (ARLNEQCPVR) lie on the Extracellular side of the membrane.

This sequence belongs to the ADIPOR family.

The protein resides in the membrane. Functionally, probable receptor, which may be involved in metabolic pathways that regulate lipid metabolism such as fatty acid oxidation. In Caenorhabditis elegans, this protein is Progestin and adipoQ receptor-like protein 1 (paqr-1).